The primary structure comprises 325 residues: SAM pointed domain-containing Ets transcription factor (325 aa).

Disordered regions lie at residues 27-50 and 79-100; these read GTEKAASGAMGPEKQEWSPSPPAT and ARAGEDHPEEPEQCPVIDSQAS. The PNT domain occupies 119 to 203; sequence EVLKDIETAC…AHLDIWKSAA (85 aa). A DNA-binding region (ETS) is located at residues 239 to 322; that stretch reads IHLWQFLKEL…ISQRLVYQFV (84 aa).

This sequence belongs to the ETS family. Interacts with the DNA-binding domain of the androgen receptor. Interacts with NKX3-1. Expressed in the accessory glands of sex organs including the prostate, seminal vesicle, coagulating gland in males, the oviduct in females, and in intestines. Expression is epithelial-specific.

It is found in the nucleus. Functionally, may function as an androgen-independent transactivator of the prostate-specific antigen (PSA) promoter. Binds to 5'-GGAT-3' DNA sequences. May play a role in the regulation of the prostate gland and/or prostate cancer development. Acts as a transcriptional activator for SERPINB5 promoter. The polypeptide is SAM pointed domain-containing Ets transcription factor (Spdef) (Mus musculus (Mouse)).